Reading from the N-terminus, the 642-residue chain is Core protein VP4 (642 aa).

This sequence belongs to the orbivirus VP4 family.

Its subcellular location is the virion. Functionally, the VP4 protein is one of the five proteins (with VP1, VP3, VP6 and VP7) which form the inner capsid of the virus. This chain is Core protein VP4 (Segment-4), found in African horse sickness virus (AHSV).